We begin with the raw amino-acid sequence, 111 residues long: Beta-microseminoprotein (111 aa).

The first 20 residues, 1-20 (MKFLLGTLVVLATFVTLCNS), serve as a signal peptide directing secretion. Glutamine 21 carries the pyrrolidone carboxylic acid modification. Disulfide bonds link cysteine 22-cysteine 67, cysteine 35-cysteine 59, cysteine 54-cysteine 90, cysteine 57-cysteine 66, and cysteine 81-cysteine 104.

Belongs to the beta-microseminoprotein family. Homodimer; Interacts with PI16. As to expression, corpora lutea, mostly in the luteal cells surrounding blood vessels.

It is found in the secreted. The protein is Beta-microseminoprotein (MSMB) of Sus scrofa (Pig).